A 450-amino-acid chain; its full sequence is Probable ECA polymerase (450 aa).

The next 11 helical transmembrane spans lie at 6-26 (FSGL…LTWF), 37-57 (VFFS…TSVL), 63-83 (VGVA…CFYA), 120-140 (LMGI…FLLF), 155-175 (GVAL…IYFL), 181-201 (AWLF…MIVG), 207-227 (IIIA…ISLW), 228-248 (MLVA…LKRY), 341-361 (LVVM…GLII), 378-398 (YKAA…IVLA), and 410-430 (VFFL…FWLF).

The protein belongs to the WzyE family. In terms of assembly, probably part of a complex composed of WzxE, WzyE and WzzE.

It localises to the cell inner membrane. It functions in the pathway bacterial outer membrane biogenesis; enterobacterial common antigen biosynthesis. In terms of biological role, probably involved in the polymerization of enterobacterial common antigen (ECA) trisaccharide repeat units. This Citrobacter koseri (strain ATCC BAA-895 / CDC 4225-83 / SGSC4696) protein is Probable ECA polymerase.